A 365-amino-acid polypeptide reads, in one-letter code: SWR1 complex subunit 2 (365 aa).

Disordered regions lie at residues 43 to 83 and 95 to 147; these read ALKE…NEKE and PGKT…EGEK. Residues 48–74 are compositionally biased toward acidic residues; it reads EHDDEYEAEREVADEFDSDFNDDEPEP. Over residues 99 to 108 the composition is skewed to basic residues; the sequence is ASKKKKKKTK. The segment covering 118–132 has biased composition (basic and acidic residues); that stretch reads GDEKPGEELGNKEQE. 2 coiled-coil regions span residues 123-150 and 184-225; these read GEELGNKEQEEKEENEAQEDMEGEKVIR and GEEK…KAIV. The span at 133–144 shows a compositional bias: acidic residues; it reads EKEENEAQEDME. The disordered stretch occupies residues 333-365; that stretch reads RTKIPKSNKSFSLRSSARFLSSESEEESEEDSD. Positions 342-354 are enriched in low complexity; the sequence is SFSLRSSARFLSS. Acidic residues predominate over residues 355–365; that stretch reads ESEEESEEDSD.

The protein belongs to the VPS72/YL1 family. Component of the SWR1 chromatin-remodeling complex composed of at least ARP6/ESD1/SUF3, PIE1, SWC6, SWC2 and H2AZs (HTA8, HTA9, HTA11). Interacts directly with SWC6 and H2AZs, but not with ARP6.

Component of the SWR1 complex which mediates the ATP-dependent exchange of histone H2A for the H2A variant H2A.F/Z leading to transcriptional regulation of selected genes (e.g. FLC) by chromatin remodeling. This chain is SWR1 complex subunit 2 (SWC2), found in Arabidopsis thaliana (Mouse-ear cress).